We begin with the raw amino-acid sequence, 231 residues long: Probable calcium-binding protein CML21 (231 aa).

EF-hand domains follow at residues 54–89 (DGLR…LEIS), 90–125 (FDEE…VYLL), 145–180 (PTFE…SGER), and 181–216 (SSGR…WVGI). 5 residues coordinate Ca(2+): Asp-67, Asp-69, Asn-71, Ser-73, and Glu-78. 10 residues coordinate Ca(2+): Asp-158, Asn-160, Asp-162, Tyr-164, Glu-169, Asp-194, Asp-196, Asn-198, Met-200, and Glu-205.

Functionally, potential calcium sensor. This is Probable calcium-binding protein CML21 (CML21) from Arabidopsis thaliana (Mouse-ear cress).